Here is a 153-residue protein sequence, read N- to C-terminus: FAD synthase (153 aa).

Residues 9-10 (TF), 14-17 (HPGH), asparagine 92, and tyrosine 119 contribute to the ATP site.

It belongs to the archaeal FAD synthase family. As to quaternary structure, homodimer. A divalent metal cation serves as cofactor.

The enzyme catalyses FMN + ATP + H(+) = FAD + diphosphate. It participates in cofactor biosynthesis; FAD biosynthesis; FAD from FMN: step 1/1. In terms of biological role, catalyzes the transfer of the AMP portion of ATP to flavin mononucleotide (FMN) to produce flavin adenine dinucleotide (FAD) coenzyme. The sequence is that of FAD synthase from Methanosphaerula palustris (strain ATCC BAA-1556 / DSM 19958 / E1-9c).